A 381-amino-acid polypeptide reads, in one-letter code: 3-dehydroquinate synthase (381 aa).

Residues E81–K86, G115–D119, T139–S140, K152, and K161 each bind NAD(+). Zn(2+) is bound by residues E194, H256, and H274.

This sequence belongs to the sugar phosphate cyclases superfamily. Dehydroquinate synthase family. Requires Co(2+) as cofactor. Zn(2+) serves as cofactor. The cofactor is NAD(+).

The protein localises to the cytoplasm. It carries out the reaction 7-phospho-2-dehydro-3-deoxy-D-arabino-heptonate = 3-dehydroquinate + phosphate. The protein operates within metabolic intermediate biosynthesis; chorismate biosynthesis; chorismate from D-erythrose 4-phosphate and phosphoenolpyruvate: step 2/7. In terms of biological role, catalyzes the conversion of 3-deoxy-D-arabino-heptulosonate 7-phosphate (DAHP) to dehydroquinate (DHQ). This Rhodopseudomonas palustris (strain TIE-1) protein is 3-dehydroquinate synthase.